A 388-amino-acid polypeptide reads, in one-letter code: (S)-8-oxocitronellyl enol synthase (388 aa).

NADP(+) contacts are provided by residues 38 to 40 (TGI), 66 to 67 (RR), 84 to 85 (DV), 108 to 109 (SW), and Gln-142. Active-site residues include Lys-146 and Tyr-178. Substrate is bound by residues Lys-146 and Tyr-178. Residues Tyr-178, Val-204, and 211–213 (SMM) each bind NADP(+). Ser-349 contacts substrate.

Belongs to the short-chain dehydrogenases/reductases (SDR) family. Highly divergent. In terms of assembly, homodimer. In terms of tissue distribution, expressed in internal phloem-associated parenchyma (IPAP) cells.

The protein resides in the cytoplasm. The protein localises to the cytosol. It carries out the reaction (S)-8-oxocitronellyl enol + NADP(+) = (6E)-8-oxogeranial + NADPH + H(+). The enzyme catalyses (S)-8-oxocitronellyl enol + NAD(+) = (6E)-8-oxogeranial + NADH + H(+). Iridoid synthase that catalyzes the first step in generation of the iridoid ring scaffold using the linear monoterpene (6E)-8-oxogeranial as substrate. Iridoids comprise a large family of distinctive bicyclic monoterpenes that possess a wide range of pharmacological activities, including anticancer, anti-inflammatory, antifungal and antibacterial activities. This is (S)-8-oxocitronellyl enol synthase from Catharanthus roseus (Madagascar periwinkle).